The chain runs to 57 residues: Small ribosomal subunit protein bS21 (57 aa).

Belongs to the bacterial ribosomal protein bS21 family.

This chain is Small ribosomal subunit protein bS21, found in Lysinibacillus sphaericus (strain C3-41).